We begin with the raw amino-acid sequence, 647 residues long: Nucleolar GTP-binding protein 1 (647 aa).

The 173-residue stretch at arginine 168 to leucine 340 folds into the OBG-type G domain. Residues glycine 174–serine 181, aspartate 220–isoleucine 224, and asparagine 288–aspartate 291 each bind GTP. Position 563 is a phosphoserine (serine 563). Residues alanine 594–arginine 647 are disordered. The segment covering methionine 598–asparagine 626 has biased composition (basic and acidic residues).

Belongs to the TRAFAC class OBG-HflX-like GTPase superfamily. OBG GTPase family. NOG subfamily. As to quaternary structure, associated with nucleolar and cytoplasmic pre-60S particles. Directly interacts with RLP24.

The protein resides in the nucleus. Its subcellular location is the nucleolus. Its function is as follows. Involved in the biogenesis of the 60S ribosomal subunit. In Saccharomyces cerevisiae (strain ATCC 204508 / S288c) (Baker's yeast), this protein is Nucleolar GTP-binding protein 1 (NOG1).